The following is a 196-amino-acid chain: V-type proton ATPase subunit E (196 aa).

It belongs to the V-ATPase E subunit family.

Functionally, produces ATP from ADP in the presence of a proton gradient across the membrane. This chain is V-type proton ATPase subunit E, found in Clostridium botulinum (strain Alaska E43 / Type E3).